The following is a 545-amino-acid chain: ATP synthase F(1) complex subunit alpha, mitochondrial (545 aa).

Residues Gln-216, Gly-218, Lys-219, Thr-220, and Ser-221 each coordinate ATP. Thr-220 lines the Mg(2+) pocket. Position 304 (Asp-304) interacts with Mg(2+). ATP-binding residues include Gln-465 and Gln-467.

The protein belongs to the ATPase alpha/beta chains family. As to quaternary structure, homotrimer. Component of the ATP synthase complex composed at least of ATP5F1A/subunit alpha, ATP5F1B/subunit beta, ATP5MC1/subunit c (homooctomer), MT-ATP6/subunit a, MT-ATP8/subunit 8, ATP5ME/subunit e, ATP5MF/subunit f, ATP5MG/subunit g, ATP5MK/subunit k, ATP5MJ/subunit j, ATP5F1C/subunit gamma, ATP5F1D/subunit delta, ATP5F1E/subunit epsilon, ATP5PF/subunit F6, ATP5PB/subunit b, ATP5PD/subunit d, ATP5PO/subunit OSCP. ATP synthase complex consists of a soluble F(1) head domain (subunits alpha(3) and beta(3)) - the catalytic core - and a membrane F(0) domain - the membrane proton channel (subunits c, a, 8, e, f, g, k and j). These two domains are linked by a central stalk (subunits gamma, delta, and epsilon) rotating inside the F1 region and a stationary peripheral stalk (subunits F6, b, d, and OSCP).

The protein resides in the mitochondrion inner membrane. Its function is as follows. Subunit alpha, of the mitochondrial membrane ATP synthase complex (F(1)F(0) ATP synthase or Complex V) that produces ATP from ADP in the presence of a proton gradient across the membrane which is generated by electron transport complexes of the respiratory chain. ATP synthase complex consist of a soluble F(1) head domain - the catalytic core - and a membrane F(1) domain - the membrane proton channel. These two domains are linked by a central stalk rotating inside the F(1) region and a stationary peripheral stalk. During catalysis, ATP synthesis in the catalytic domain of F(1) is coupled via a rotary mechanism of the central stalk subunits to proton translocation. In vivo, can only synthesize ATP although its ATP hydrolase activity can be activated artificially in vitro. With the catalytic subunit beta (ATP5F1B), forms the catalytic core in the F(1) domain. Subunit alpha does not bear the catalytic high-affinity ATP-binding sites. The protein is ATP synthase F(1) complex subunit alpha, mitochondrial of Xenopus laevis (African clawed frog).